The following is a 299-amino-acid chain: Acetylglutamate kinase (299 aa).

Substrate is bound by residues 72-73 (GG), Arg94, and Asn196.

The protein belongs to the acetylglutamate kinase family. ArgB subfamily.

It localises to the cytoplasm. It catalyses the reaction N-acetyl-L-glutamate + ATP = N-acetyl-L-glutamyl 5-phosphate + ADP. It participates in amino-acid biosynthesis; L-arginine biosynthesis; N(2)-acetyl-L-ornithine from L-glutamate: step 2/4. In terms of biological role, catalyzes the ATP-dependent phosphorylation of N-acetyl-L-glutamate. The protein is Acetylglutamate kinase of Burkholderia mallei (strain NCTC 10247).